The sequence spans 373 residues: 3 beta-hydroxysteroid dehydrogenase/Delta 5--&gt;4-isomerase (373 aa).

The active-site Proton acceptor is the Y155. Position 159 (K159) interacts with NAD(+). The chain crosses the membrane as a helical span at residues 288–308 (ISLEYWLAFLLEIVSFLLSPI).

This sequence belongs to the 3-beta-HSD family.

The protein resides in the endoplasmic reticulum membrane. It localises to the mitochondrion membrane. It carries out the reaction a 3beta-hydroxy-Delta(5)-steroid + NAD(+) = a 3-oxo-Delta(5)-steroid + NADH + H(+). The catalysed reaction is a 3-oxo-Delta(5)-steroid = a 3-oxo-Delta(4)-steroid. The protein operates within lipid metabolism; steroid biosynthesis. Functionally, 3-beta-HSD is a bifunctional enzyme, that catalyzes the oxidative conversion of Delta(5)-ene-3-beta-hydroxy steroid, and the oxidative conversion of ketosteroids. The 3-beta-HSD enzymatic system plays a crucial role in the biosynthesis of all classes of hormonal steroids. This Canis lupus familiaris (Dog) protein is 3 beta-hydroxysteroid dehydrogenase/Delta 5--&gt;4-isomerase (HSD3B).